Here is a 102-residue protein sequence, read N- to C-terminus: Small ribosomal subunit protein uS10 (102 aa).

It belongs to the universal ribosomal protein uS10 family. As to quaternary structure, part of the 30S ribosomal subunit.

Functionally, involved in the binding of tRNA to the ribosomes. This Streptococcus sanguinis (strain SK36) protein is Small ribosomal subunit protein uS10.